Reading from the N-terminus, the 252-residue chain is tRNA1(Val) (adenine(37)-N6)-methyltransferase (252 aa).

It belongs to the methyltransferase superfamily. tRNA (adenine-N(6)-)-methyltransferase family.

It localises to the cytoplasm. It carries out the reaction adenosine(37) in tRNA1(Val) + S-adenosyl-L-methionine = N(6)-methyladenosine(37) in tRNA1(Val) + S-adenosyl-L-homocysteine + H(+). In terms of biological role, specifically methylates the adenine in position 37 of tRNA(1)(Val) (anticodon cmo5UAC). The sequence is that of tRNA1(Val) (adenine(37)-N6)-methyltransferase from Proteus mirabilis (strain HI4320).